A 184-amino-acid chain; its full sequence is MASPLPVRTLPLILILLAVLAPGASDFNISSLSGPLSPALTESLLVALPPCHLTGGNATLMVRRANDSKVVKSSFMVPPCRGRRELVSVVDSGSGFTVTRLSAYQVTNLVPGTKYYISYLVTKGASTESSREIPMSTLPRKNMEGIGLGMARTGGMVVITVLLSVAMFLLVVGFITALALGARK.

The signal sequence occupies residues 1–25 (MASPLPVRTLPLILILLAVLAPGAS). Positions 26-84 (DFNISSLSGPLSPALTESLLVALPPCHLTGGNATLMVRRANDSKVVKSSFMVPPCRGRR) are excised as a propeptide. N-linked (GlcNAc...) asparagine glycans are attached at residues Asn28, Asn57, and Asn66. Over 85 to 155 (ELVSVVDSGS…IGLGMARTGG (71 aa)) the chain is Lumenal. A helical transmembrane segment spans residues 156–180 (MVVITVLLSVAMFLLVVGFITALAL). The Cytoplasmic segment spans residues 181–184 (GARK).

The protein belongs to the uroplakin-2 family. In terms of assembly, interacts with uroplakin-1a (UPK1A). Expressed only in the urothelium. Localizes to urothelial superficial cells.

The protein localises to the cell membrane. Its function is as follows. Component of the asymmetric unit membrane (AUM); a highly specialized biomembrane elaborated by terminally differentiated urothelial cells. May play an important role in regulating the assembly of the AUM. This is Uroplakin-2 (UPK2) from Sus scrofa (Pig).